A 299-amino-acid chain; its full sequence is Acetaldehyde dehydrogenase (299 aa).

11-14 (SGNI) is an NAD(+) binding site. Cys-126 functions as the Acyl-thioester intermediate in the catalytic mechanism. Residues 157–165 (SAGPGTRAN) and Asn-267 contribute to the NAD(+) site.

The protein belongs to the acetaldehyde dehydrogenase family.

It catalyses the reaction acetaldehyde + NAD(+) + CoA = acetyl-CoA + NADH + H(+). This is Acetaldehyde dehydrogenase from Bacillus cereus (strain ATCC 10987 / NRS 248).